Here is a 38-residue protein sequence, read N- to C-terminus: Photosystem II reaction center protein L (38 aa).

The chain crosses the membrane as a helical span at residues 17–37 (SLFWGLLLIFVLAVLFSSYFF).

This sequence belongs to the PsbL family. PSII is composed of 1 copy each of membrane proteins PsbA, PsbB, PsbC, PsbD, PsbE, PsbF, PsbH, PsbI, PsbJ, PsbK, PsbL, PsbM, PsbT, PsbX, PsbY, PsbZ, Psb30/Ycf12, at least 3 peripheral proteins of the oxygen-evolving complex and a large number of cofactors. It forms dimeric complexes.

The protein localises to the plastid. It is found in the chloroplast thylakoid membrane. In terms of biological role, one of the components of the core complex of photosystem II (PSII). PSII is a light-driven water:plastoquinone oxidoreductase that uses light energy to abstract electrons from H(2)O, generating O(2) and a proton gradient subsequently used for ATP formation. It consists of a core antenna complex that captures photons, and an electron transfer chain that converts photonic excitation into a charge separation. This subunit is found at the monomer-monomer interface and is required for correct PSII assembly and/or dimerization. This Zygnema circumcarinatum (Green alga) protein is Photosystem II reaction center protein L.